Consider the following 595-residue polypeptide: Solute carrier family 13 member 1 (595 aa).

5 helical membrane passes run 13–33 (FLFV…LHTK), 41–61 (LFVV…TALL), 77–97 (VASA…CLAT), 108–128 (IALK…LGFM), and 131–151 (TAFL…MPIA). Residues Asn-174 and Asn-207 are each glycosylated (N-linked (GlcNAc...) asparagine). The next 8 helical transmembrane spans lie at 239 to 259 (LTCL…ITGT), 290 to 310 (PAAL…FLGF), 348 to 368 (IVTL…DPGF), 381 to 401 (GFAT…LIPA), 464 to 484 (PLGS…VTSL), 491 to 511 (PATI…IHVN), 512 to 532 (PLYI…LPVA), and 554 to 574 (GLGV…TWIV). A glycan (N-linked (GlcNAc...) asparagine) is linked at Asn-591.

This sequence belongs to the SLC13A/DASS transporter (TC 2.A.47) family. NADC subfamily. Highly expressed in kidney; not detectable in the other tissues tested.

The protein localises to the apical cell membrane. The catalysed reaction is sulfate(out) + 3 Na(+)(out) = sulfate(in) + 3 Na(+)(in). The enzyme catalyses selenate(out) + 3 Na(+)(out) = selenate(in) + 3 Na(+)(in). It catalyses the reaction thiosulfate(out) + 3 Na(+)(out) = thiosulfate(in) + 3 Na(+)(in). Its activity is regulated as follows. Inhibited by thiosulfate, selenate, molybdate, tungstate, citrate and succinate. In terms of biological role, sodium:sulfate symporter that mediates sulfate reabsorption in the kidney and small intestine. Can also mediate the transport of selenate and thiosulfate. This chain is Solute carrier family 13 member 1 (SLC13A1), found in Homo sapiens (Human).